The primary structure comprises 181 residues: Malignant T-cell-amplified sequence 1 (181 aa).

Phosphothreonine; by MAPK1 and MAPK3 is present on Thr81. The 80-residue stretch at 92–171 (LPHQQVDKGA…IGIENIHYLN (80 aa)) folds into the PUA domain. A Phosphoserine; by CDK1 modification is found at Ser118.

It belongs to the MCTS1 family. In terms of assembly, interacts (via PUA domain) with DENR; the complex regulates translation reinitiation. In terms of processing, phosphorylation is critical for stabilization and promotion of cell proliferation. In terms of tissue distribution, ubiquitous. Over-expressed in T-cell lymphoid cell lines and in non-Hodgkin lymphoma cell lines as well as in a subset of primary large B-cell lymphomas.

It localises to the cytoplasm. Its function is as follows. Translation regulator forming a complex with DENR to promote translation reinitiation. Translation reinitiation is the process where the small ribosomal subunit remains attached to the mRNA following termination of translation of a regulatory upstream ORF (uORF), and resume scanning on the same mRNA molecule to initiate translation of a downstream ORF, usually the main ORF (mORF). The MCTS1/DENR complex is pivotal to two linked mechanisms essential for translation reinitiation. Firstly, the dissociation of deacylated tRNAs from post-termination 40S ribosomal complexes during ribosome recycling. Secondly, the recruitment in an EIF2-independent manner of aminoacylated initiator tRNA to P site of 40S ribosomes for a new round of translation. This regulatory mechanism governs the translation of more than 150 genes which translation reinitiation is MCTS1/DENR complex-dependent. Consequently, modulates various unrelated biological processes including cell cycle regulation and DNA damage signaling and repair. Notably, it positively regulates interferon gamma immunity to mycobacteria by enhancing the translation of JAK2. The protein is Malignant T-cell-amplified sequence 1 (MCTS1) of Homo sapiens (Human).